We begin with the raw amino-acid sequence, 263 residues long: LOB domain-containing protein 41 (263 aa).

Residues 3 to 109 (MSCNGCRVLR…VEAVMKGEPV (107 aa)) enclose the LOB domain. The interval 162–204 (TVAIQAESEGKSDEASHDSSLSHQSEIVAAHEGESKESESNVS) is disordered. Composition is skewed to basic and acidic residues over residues 169–178 (SEGKSDEASH) and 190–200 (AAHEGESKESE).

It belongs to the LOB domain-containing protein family. Expressed in young shoots, roots, stems, leaves and flowers.

This chain is LOB domain-containing protein 41 (LBD41), found in Arabidopsis thaliana (Mouse-ear cress).